The chain runs to 119 residues: C-C motif chemokine 24 (119 aa).

An N-terminal signal peptide occupies residues 1-26; it reads MAGLMTIVTSLLFLGVCAHHIIPTGS. 2 disulfides stabilise this stretch: cysteine 33/cysteine 58 and cysteine 34/cysteine 74. A glycan (N-linked (GlcNAc...) asparagine) is linked at asparagine 115.

Belongs to the intercrine beta (chemokine CC) family. N-glycosylated. In terms of tissue distribution, activated monocytes and activated T lymphocytes.

Its subcellular location is the secreted. Chemotactic for resting T-lymphocytes, and eosinophils. Has lower chemotactic activity for neutrophils but none for monocytes and activated lymphocytes. Is a strong suppressor of colony formation by a multipotential hematopoietic progenitor cell line. Binds to CCR3. This is C-C motif chemokine 24 from Homo sapiens (Human).